Reading from the N-terminus, the 232-residue chain is Phosphoribosylformylglycinamidine synthase subunit PurQ (232 aa).

The Glutamine amidotransferase type-1 domain occupies 3–232; sequence FAVIVFPGSN…SLVASALAVV (230 aa). C86 functions as the Nucleophile in the catalytic mechanism. Catalysis depends on residues H203 and E205.

Part of the FGAM synthase complex composed of 1 PurL, 1 PurQ and 2 PurS subunits.

The protein localises to the cytoplasm. It catalyses the reaction N(2)-formyl-N(1)-(5-phospho-beta-D-ribosyl)glycinamide + L-glutamine + ATP + H2O = 2-formamido-N(1)-(5-O-phospho-beta-D-ribosyl)acetamidine + L-glutamate + ADP + phosphate + H(+). It carries out the reaction L-glutamine + H2O = L-glutamate + NH4(+). The protein operates within purine metabolism; IMP biosynthesis via de novo pathway; 5-amino-1-(5-phospho-D-ribosyl)imidazole from N(2)-formyl-N(1)-(5-phospho-D-ribosyl)glycinamide: step 1/2. Part of the phosphoribosylformylglycinamidine synthase complex involved in the purines biosynthetic pathway. Catalyzes the ATP-dependent conversion of formylglycinamide ribonucleotide (FGAR) and glutamine to yield formylglycinamidine ribonucleotide (FGAM) and glutamate. The FGAM synthase complex is composed of three subunits. PurQ produces an ammonia molecule by converting glutamine to glutamate. PurL transfers the ammonia molecule to FGAR to form FGAM in an ATP-dependent manner. PurS interacts with PurQ and PurL and is thought to assist in the transfer of the ammonia molecule from PurQ to PurL. In Gloeobacter violaceus (strain ATCC 29082 / PCC 7421), this protein is Phosphoribosylformylglycinamidine synthase subunit PurQ.